We begin with the raw amino-acid sequence, 91 residues long: Non-specific lipid-transfer protein 1 (91 aa).

4 disulfides stabilise this stretch: C4-C51, C14-C28, C29-C74, and C49-C88.

Detected in seeds (at protein level).

Its function is as follows. Plant non-specific lipid-transfer proteins transfer phospholipids as well as galactolipids across membranes. May play a role in wax or cutin deposition in the cell walls of expanding epidermal cells and certain secretory tissues. The chain is Non-specific lipid-transfer protein 1 from Trachyspermum ammi (Ajowan caraway).